The following is a 354-amino-acid chain: Uroporphyrinogen decarboxylase (354 aa).

Substrate-binding positions include 27-31, D77, Y154, T209, and H327; that span reads RQAGR.

This sequence belongs to the uroporphyrinogen decarboxylase family. Homodimer.

It localises to the cytoplasm. It carries out the reaction uroporphyrinogen III + 4 H(+) = coproporphyrinogen III + 4 CO2. It participates in porphyrin-containing compound metabolism; protoporphyrin-IX biosynthesis; coproporphyrinogen-III from 5-aminolevulinate: step 4/4. Catalyzes the decarboxylation of four acetate groups of uroporphyrinogen-III to yield coproporphyrinogen-III. This is Uroporphyrinogen decarboxylase from Escherichia fergusonii (strain ATCC 35469 / DSM 13698 / CCUG 18766 / IAM 14443 / JCM 21226 / LMG 7866 / NBRC 102419 / NCTC 12128 / CDC 0568-73).